The chain runs to 573 residues: Kinesin light chain 1 (573 aa).

Residues 27–156 (KTKQVIQGLE…HLEFMNQLKK (130 aa)) are a coiled coil. Residues 155–176 (KKYDDDISPSEDKDTDSTKEPL) show a composition bias toward basic and acidic residues. Residues 155–203 (KKYDDDISPSEDKDTDSTKEPLDDLFPNDEDDPGQGIQQQHSSAAAAAQ) are disordered. Phosphoserine is present on serine 162. Over residues 188–203 (GQGIQQQHSSAAAAAQ) the composition is skewed to low complexity. TPR repeat units lie at residues 213-246 (LRTL…LEKT), 255-288 (ATML…REKT), 297-330 (AATL…REKV), 339-372 (AKQL…YQTK), and 381-414 (AKTK…AHER). Tyrosine 449 carries the post-translational modification Phosphotyrosine. Position 460 is a phosphoserine (serine 460). The TPR 6 repeat unit spans residues 464-497 (TTTLKNLGALYRRQGKFEAAETLEEAAMRSRKQG). 2 positions are modified to phosphoserine; by AMPK: serine 521 and serine 524. At glutamate 547 the chain carries Phosphoserine. A disordered region spans residues 553–573 (SGRASFCGKRQQQQWPGRRHR).

This sequence belongs to the kinesin light chain family. As to quaternary structure, oligomeric complex composed of two heavy chains and two light chains. Interacts with SPAG9. Interacts with ATCAY; may link mitochondria to KLC1 and regulate mitochondria localization into neuron projections. Interacts (via TPR repeats) with TOR1A; the interaction associates TOR1A with the kinesin oligomeric complex. Interacts with BORCS5. Interacts with MAPK8IP3/JIP3 and NTRK2/TRKB; interaction with NTRK2/TRKB is mediated by MAPK8IP3/JIP3. Interacts with CLSTN1; phosphorylation at Ser-460 inhibits interaction with CLSTN1. (Microbial infection) Interacts with adenovirus hexon-interlacing protein; this interaction leads to capsid disruption at the nuclear pore complex during virus entry into host cell. Post-translationally, phosphorylation at Ser-460 by ERK inhibits interaction with CLSTN1 and localization to cytoplasmic vesicles. Found in a variety of tissues. Mostly abundant in brain and spine.

It is found in the cell projection. The protein localises to the growth cone. Its subcellular location is the cytoplasmic vesicle. The protein resides in the cytoplasm. It localises to the cytoskeleton. Functionally, kinesin is a microtubule-associated force-producing protein that may play a role in organelle transport. The light chain may function in coupling of cargo to the heavy chain or in the modulation of its ATPase activity. In Homo sapiens (Human), this protein is Kinesin light chain 1 (KLC1).